A 250-amino-acid polypeptide reads, in one-letter code: MSQLEKIYGVHAVEALLRHHPKRVKHIWLAEGRNDPRVQTLVALASENRVTIGQAERREMDAWVEGVHQGVVADVSPSQVWGEAMLDELLDRSEGPPLLLVLDGVTDPHNLGACLRTADAAGALAVIVPKDKSATLTPAVRKVACGAAEVIPLVAVTNLARTLEKLQQRGLWVVGTAGEAEVELYQQDLTGPTIIIMGAEGKGMRRLTREHCDYLVRLPMAGSVSSLNVSVATGVCLFEALRQRSAKRKP.

Gly-198, Leu-218, and Leu-227 together coordinate S-adenosyl-L-methionine.

Belongs to the class IV-like SAM-binding methyltransferase superfamily. RNA methyltransferase TrmH family. RlmB subfamily.

The protein localises to the cytoplasm. The enzyme catalyses guanosine(2251) in 23S rRNA + S-adenosyl-L-methionine = 2'-O-methylguanosine(2251) in 23S rRNA + S-adenosyl-L-homocysteine + H(+). Functionally, specifically methylates the ribose of guanosine 2251 in 23S rRNA. The protein is 23S rRNA (guanosine-2'-O-)-methyltransferase RlmB of Pseudomonas syringae pv. tomato (strain ATCC BAA-871 / DC3000).